The primary structure comprises 579 residues: Sulfite reductase [NADPH] hemoprotein beta-component (579 aa).

Residues cysteine 434, cysteine 440, cysteine 479, and cysteine 483 each contribute to the [4Fe-4S] cluster site. Cysteine 483 provides a ligand contact to siroheme.

The protein belongs to the nitrite and sulfite reductase 4Fe-4S domain family. In terms of assembly, alpha(8)-beta(8). The alpha component is a flavoprotein, the beta component is a hemoprotein. It depends on siroheme as a cofactor. [4Fe-4S] cluster is required as a cofactor.

The catalysed reaction is hydrogen sulfide + 3 NADP(+) + 3 H2O = sulfite + 3 NADPH + 4 H(+). The protein operates within sulfur metabolism; hydrogen sulfide biosynthesis; hydrogen sulfide from sulfite (NADPH route): step 1/1. Functionally, component of the sulfite reductase complex that catalyzes the 6-electron reduction of sulfite to sulfide. This is one of several activities required for the biosynthesis of L-cysteine from sulfate. The chain is Sulfite reductase [NADPH] hemoprotein beta-component from Salmonella choleraesuis (strain SC-B67).